Consider the following 492-residue polypeptide: GTPase Der (492 aa).

2 EngA-type G domains span residues 3-167 and 207-382; these read FTLA…EKFE and LQVA…DVWN. GTP-binding positions include 9–16, 56–60, 119–122, 213–220, 260–264, and 325–328; these read GRPNVGKS, DSAGL, NKSE, GRPNAGKS, DTAGM, and NKWD. One can recognise a KH-like domain in the interval 383-469; sequence RRVPTAALNR…RLTLRGQGDK (87 aa). The disordered stretch occupies residues 461-492; the sequence is LTLRGQGDKNPYKGKKKSTPSRLRKHLEGRKS. Residues 472–492 show a composition bias toward basic residues; sequence YKGKKKSTPSRLRKHLEGRKS.

It belongs to the TRAFAC class TrmE-Era-EngA-EngB-Septin-like GTPase superfamily. EngA (Der) GTPase family. As to quaternary structure, associates with the 50S ribosomal subunit.

Functionally, GTPase that plays an essential role in the late steps of ribosome biogenesis. This is GTPase Der from Ruegeria sp. (strain TM1040) (Silicibacter sp.).